Here is a 138-residue protein sequence, read N- to C-terminus: Probable non-specific lipid-transfer protein 1 (138 aa).

The signal sequence occupies residues 1–36; the sequence is MRTVSARSSVALVVIVAAVLVWTSSASVAPAPAPGS. Cystine bridges form between cysteine 40–cysteine 88, cysteine 50–cysteine 65, cysteine 66–cysteine 111, and cysteine 86–cysteine 127.

It belongs to the plant LTP family.

In terms of biological role, plant non-specific lipid-transfer proteins transfer phospholipids as well as galactolipids across membranes. May play a role in wax or cutin deposition in the cell walls of expanding epidermal cells and certain secretory tissues. In Parietaria judaica (Pellitory-of-the-wall), this protein is Probable non-specific lipid-transfer protein 1.